Reading from the N-terminus, the 2184-residue chain is Genome polyprotein (2184 aa).

The N-myristoyl glycine; by host moiety is linked to residue Gly2. Residues Gly2–Gln1494 are Cytoplasmic-facing. The interval Phe567–Val583 is amphipathic alpha-helix. Residues His871 and Asp889 each act as for protease 2A activity in the active site. 2 residues coordinate Zn(2+): Cys906 and Cys908. Cys960 functions as the For protease 2A activity in the catalytic mechanism. Cys966 and His968 together coordinate Zn(2+). Residues Asn1100–Gln1172 are membrane-binding. The interval Asn1100–Thr1238 is oligomerization. Residues Ala1121–Gln1125 are RNA-binding. Residues Glu1204 to Asn1360 form the SF3 helicase domain. Zn(2+) contacts are provided by Cys1368, Cys1380, and Cys1385. A C4-type; degenerate zinc finger spans residues Cys1368 to Cys1385. The RNA-binding stretch occupies residues Glu1412–Val1419. Residues Leu1423–Gln1428 form an oligomerization region. The stretch at Ala1495–Tyr1510 is an intramembrane region. Residues Lys1511–Phe2184 lie on the Cytoplasmic side of the membrane. Tyr1520 bears the O-(5'-phospho-RNA)-tyrosine mark. A Peptidase C3 domain is found at Gly1540–Phe1718. Residues His1579, Glu1610, and Cys1686 each act as for protease 3C activity in the active site. The RdRp catalytic domain maps to Gly1949–Leu2065. Asp1955 and Asp2051 together coordinate Mg(2+).

Belongs to the picornaviruses polyprotein family. In terms of assembly, interacts with capsid protein VP1 and capsid protein VP3 to form heterotrimeric protomers. As to quaternary structure, interacts with capsid protein VP0, and capsid protein VP3 to form heterotrimeric protomers. Five protomers subsequently associate to form pentamers which serve as building blocks for the capsid. Interacts with capsid protein VP2, capsid protein VP3 and capsid protein VP4 following cleavage of capsid protein VP0. Interacts with capsid protein VP1 and capsid protein VP3 in the mature capsid. In terms of assembly, interacts with capsid protein VP0 and capsid protein VP1 to form heterotrimeric protomers. Five protomers subsequently associate to form pentamers which serve as building blocks for the capsid. Interacts with capsid protein VP4 in the mature capsid. Interacts with protein 2C; this interaction may be important for virion morphogenesis. As to quaternary structure, interacts with capsid protein VP1 and capsid protein VP3. Homodimer. In terms of assembly, homohexamer; forms a hexameric ring structure with 6-fold symmetry characteristic of AAA+ ATPases. Interacts (via N-terminus) with host RTN3 (via reticulon domain); this interaction is important for viral replication. Interacts with capsid protein VP3; this interaction may be important for virion morphogenesis. As to quaternary structure, interacts with protein 3CD. Homodimer. Interacts with host GBF1. Interacts (via GOLD domain) with host ACBD3 (via GOLD domain); this interaction allows the formation of a viral protein 3A/ACBD3 heterotetramer with a 2:2 stoichiometry, which will stimulate the recruitment of host PI4KB in order to synthesize PI4P at the viral RNA replication sites. In terms of assembly, interacts with RNA-directed RNA polymerase. As to quaternary structure, interacts with protein 3AB and with RNA-directed RNA polymerase. Interacts with Viral protein genome-linked and with protein 3CD. The cofactor is Mg(2+). Specific enzymatic cleavages in vivo by the viral proteases yield processing intermediates and the mature proteins. Post-translationally, myristoylation is required for the formation of pentamers during virus assembly. Further assembly of 12 pentamers and a molecule of genomic RNA generates the provirion. In terms of processing, during virion maturation, immature virions are rendered infectious following cleavage of VP0 into VP4 and VP2. This maturation seems to be an autocatalytic event triggered by the presence of RNA in the capsid and it is followed by a conformational change infectious virion. Myristoylation is required during RNA encapsidation and formation of the mature virus particle. Post-translationally, VPg is uridylylated by the polymerase into VPg-pUpU. This acts as a nucleotide-peptide primer for the genomic RNA replication.

The protein localises to the virion. It is found in the host cytoplasm. Its subcellular location is the host cytoplasmic vesicle membrane. It localises to the host nucleus. The catalysed reaction is a ribonucleoside 5'-triphosphate + H2O = a ribonucleoside 5'-diphosphate + phosphate + H(+). It catalyses the reaction Selective cleavage of Tyr-|-Gly bond in the picornavirus polyprotein.. It carries out the reaction RNA(n) + a ribonucleoside 5'-triphosphate = RNA(n+1) + diphosphate. The enzyme catalyses Selective cleavage of Gln-|-Gly bond in the poliovirus polyprotein. In other picornavirus reactions Glu may be substituted for Gln, and Ser or Thr for Gly.. Replication or transcription is subject to high level of random mutations by the nucleotide analog ribavirin. Functionally, forms an icosahedral capsid of pseudo T=3 symmetry with capsid proteins VP2 and VP3. The capsid is 300 Angstroms in diameter, composed of 60 copies of each capsid protein and enclosing the viral positive strand RNA genome. Capsid protein VP1 mainly forms the vertices of the capsid. Capsid protein VP1 interacts with host ITGA2/ITGB1 to provide virion attachment to target host cells. This attachment induces virion internalization predominantly through caveolin-mediated endocytosis. Tyrosine kinases are probably involved in the entry process. After binding to its receptor, the capsid undergoes conformational changes. Capsid protein VP1 N-terminus (that contains an amphipathic alpha-helix) and capsid protein VP4 are externalized. Together, they shape a pore in the host membrane through which viral genome is translocated to host cell cytoplasm. In terms of biological role, forms an icosahedral capsid of pseudo T=3 symmetry with capsid proteins VP2 and VP3. The capsid is 300 Angstroms in diameter, composed of 60 copies of each capsid protein and enclosing the viral positive strand RNA genome. Its function is as follows. Lies on the inner surface of the capsid shell. After binding to the host receptor, the capsid undergoes conformational changes. Capsid protein VP4 is released, Capsid protein VP1 N-terminus is externalized, and together, they shape a pore in the host membrane through which the viral genome is translocated into the host cell cytoplasm. Component of immature procapsids, which is cleaved into capsid proteins VP4 and VP2 after maturation. Allows the capsid to remain inactive before the maturation step. Functionally, cysteine protease that cleaves viral polyprotein and specific host proteins. It is responsible for the autocatalytic cleavage between the P1 and P2 regions, which is the first cleavage occurring in the polyprotein. Also cleaves the host translation initiation factor EIF4G1, in order to shut down the capped cellular mRNA translation. Inhibits the host nucleus-cytoplasm protein and RNA trafficking by cleaving host members of the nuclear pores. Counteracts stress granule formation probably by antagonizing its assembly or promoting its dissassembly. In terms of biological role, plays an essential role in the virus replication cycle by acting as a viroporin. Creates a pore in the host endoplasmic reticulum and as a consequence releases Ca2+ in the cytoplasm of infected cell. In turn, high levels of cytoplasmic calcium may trigger membrane trafficking and transport of viral ER-associated proteins to viroplasms, sites of viral genome replication. Its function is as follows. Induces and associates with structural rearrangements of intracellular membranes. Displays RNA-binding, nucleotide binding and NTPase activities. May play a role in virion morphogenesis and viral RNA encapsidation by interacting with the capsid protein VP3. Localizes the viral replication complex to the surface of membranous vesicles. Together with protein 3CD binds the Cis-Active RNA Element (CRE) which is involved in RNA synthesis initiation. Acts as a cofactor to stimulate the activity of 3D polymerase, maybe through a nucleid acid chaperone activity. Functionally, localizes the viral replication complex to the surface of membranous vesicles. It inhibits host cell endoplasmic reticulum-to-Golgi apparatus transport and causes the disassembly of the Golgi complex, possibly through GBF1 interaction. This would result in depletion of MHC, trail receptors and IFN receptors at the host cell surface. Plays an essential role in viral RNA replication by recruiting ACBD3 and PI4KB at the viral replication sites, thereby allowing the formation of the rearranged membranous structures where viral replication takes place. In terms of biological role, acts as a primer for viral RNA replication and remains covalently bound to viral genomic RNA. VPg is uridylylated prior to priming replication into VPg-pUpU. The oriI viral genomic sequence may act as a template for this. The VPg-pUpU is then used as primer on the genomic RNA poly(A) by the RNA-dependent RNA polymerase to replicate the viral genome. During genome replication, the VPg-RNA linkage is removed by the host TDP2, thereby accelerating replication. During the late stage of the replication cycle, host TDP2 is excluded from sites of viral RNA synthesis and encapsidation, allowing for the generation of progeny virions. Its function is as follows. Involved in the viral replication complex and viral polypeptide maturation. It exhibits protease activity with a specificity and catalytic efficiency that is different from protease 3C. Protein 3CD lacks polymerase activity. Protein 3CD binds to the 5'UTR of the viral genome. Replicates the viral genomic RNA on the surface of intracellular membranes. May form linear arrays of subunits that propagate along a strong head-to-tail interaction called interface-I. Covalently attaches UMP to a tyrosine of VPg, which is used to prime RNA synthesis. The positive stranded RNA genome is first replicated at virus induced membranous vesicles, creating a dsRNA genomic replication form. This dsRNA is then used as template to synthesize positive stranded RNA genomes. ss(+)RNA genomes are either translated, replicated or encapsidated. Functionally, major viral protease that mediates proteolytic processing of the polyprotein. Cleaves host EIF5B, contributing to host translation shutoff. Also cleaves host PABPC1, contributing to host translation shutoff. Cleaves host NLRP1, triggers host N-glycine-mediated degradation of the autoinhibitory NLRP1 N-terminal fragment. The polypeptide is Genome polyprotein (Homo sapiens (Human)).